Reading from the N-terminus, the 397-residue chain is 3-ketoacyl-CoA thiolase, mitochondrial (397 aa).

Residues 1 to 16 (MALLRGVFIVAAKRTP) constitute a mitochondrion; not cleaved transit peptide. Lys-25 carries the post-translational modification N6-acetyllysine; alternate. Lys-25 carries the N6-succinyllysine; alternate modification. An N6-succinyllysine modification is found at Lys-45. The active-site Acyl-thioester intermediate is Cys-92. Thr-119 bears the Phosphothreonine mark. At Ser-121 the chain carries Phosphoserine. Tyr-127 carries the post-translational modification Phosphotyrosine. Position 136 is a phosphothreonine (Thr-136). An N6-acetyllysine; alternate mark is found at Lys-137, Lys-143, Lys-158, Lys-171, Lys-191, and Lys-209. An N6-succinyllysine; alternate mark is found at Lys-137, Lys-143, Lys-158, Lys-171, Lys-191, and Lys-209. N6-succinyllysine is present on residues Lys-211, Lys-212, and Lys-214. The CoA site is built by Arg-224 and Thr-227. Lys-240 carries the N6-succinyllysine modification. N6-acetyllysine is present on Lys-241. CoA is bound at residue Ser-251. Residues Lys-269 and Lys-270 each carry the N6-acetyllysine modification. An N6-acetyllysine; alternate modification is found at Lys-305. Residue Lys-305 is modified to N6-succinyllysine; alternate. At Ser-310 the chain carries Phosphoserine. Lys-312 is subject to N6-acetyllysine; alternate. Lys-312 carries the post-translational modification N6-succinyllysine; alternate. Ser-333 is subject to Phosphoserine. At Lys-340 the chain carries N6-acetyllysine. Phosphoserine is present on Ser-344. Lys-375 is subject to N6-acetyllysine. Cys-382 serves as the catalytic Proton donor/acceptor.

Belongs to the thiolase-like superfamily. Thiolase family. As to quaternary structure, homotetramer. Interacts with BNIP3. Expressed in liver, brown adipose tissue and heart (at protein level).

The protein localises to the mitochondrion. It catalyses the reaction an acyl-CoA + acetyl-CoA = a 3-oxoacyl-CoA + CoA. The catalysed reaction is 2 acetyl-CoA = acetoacetyl-CoA + CoA. It carries out the reaction acetyl-CoA + H2O = acetate + CoA + H(+). The enzyme catalyses propanoyl-CoA + H2O = propanoate + CoA + H(+). It catalyses the reaction butanoyl-CoA + H2O = butanoate + CoA + H(+). The catalysed reaction is hexanoyl-CoA + H2O = hexanoate + CoA + H(+). It carries out the reaction octanoyl-CoA + H2O = octanoate + CoA + H(+). The enzyme catalyses decanoyl-CoA + H2O = decanoate + CoA + H(+). It catalyses the reaction dodecanoyl-CoA + H2O = dodecanoate + CoA + H(+). The catalysed reaction is tetradecanoyl-CoA + H2O = tetradecanoate + CoA + H(+). It carries out the reaction hexadecanoyl-CoA + H2O = hexadecanoate + CoA + H(+). It participates in lipid metabolism; fatty acid beta-oxidation. The 3-oxoacetyl-CoA thiolase activity is inhibited by acetyl-CoA while the acetyl-CoA hydrolase activity is inhibited by acetoacetyl-CoA. Its function is as follows. In the production of energy from fats, this is one of the enzymes that catalyzes the last step of the mitochondrial beta-oxidation pathway, an aerobic process breaking down fatty acids into acetyl-CoA. Using free coenzyme A/CoA, catalyzes the thiolytic cleavage of medium- to long-chain unbranched 3-oxoacyl-CoAs into acetyl-CoA and a fatty acyl-CoA shortened by two carbon atoms. Also catalyzes the condensation of two acetyl-CoA molecules into acetoacetyl-CoA and could be involved in the production of ketone bodies. Also displays hydrolase activity on various fatty acyl-CoAs. Thereby, could be responsible for the production of acetate in a side reaction to beta-oxidation. Abolishes BNIP3-mediated apoptosis and mitochondrial damage. The chain is 3-ketoacyl-CoA thiolase, mitochondrial (Acaa2) from Rattus norvegicus (Rat).